A 202-amino-acid polypeptide reads, in one-letter code: Small ribosomal subunit protein uS2 (202 aa).

This sequence belongs to the universal ribosomal protein uS2 family.

This is Small ribosomal subunit protein uS2 (rps2) from Pyrococcus abyssi (strain GE5 / Orsay).